The sequence spans 160 residues: Transcription antitermination protein NusB (160 aa).

It belongs to the NusB family.

In terms of biological role, involved in transcription antitermination. Required for transcription of ribosomal RNA (rRNA) genes. Binds specifically to the boxA antiterminator sequence of the ribosomal RNA (rrn) operons. The polypeptide is Transcription antitermination protein NusB (Gluconobacter oxydans (strain 621H) (Gluconobacter suboxydans)).